A 188-amino-acid chain; its full sequence is Probable RNA 2'-phosphotransferase (188 aa).

It belongs to the KptA/TPT1 family.

Functionally, removes the 2'-phosphate from RNA via an intermediate in which the phosphate is ADP-ribosylated by NAD followed by a presumed transesterification to release the RNA and generate ADP-ribose 1''-2''-cyclic phosphate (APPR&gt;P). May function as an ADP-ribosylase. This is Probable RNA 2'-phosphotransferase from Lacticaseibacillus paracasei (strain ATCC 334 / BCRC 17002 / CCUG 31169 / CIP 107868 / KCTC 3260 / NRRL B-441) (Lactobacillus paracasei).